A 260-amino-acid chain; its full sequence is Salicylic acid-binding protein 2 (260 aa).

Residues A13, S81, and K159 each contribute to the salicylate site. Residue S81 is the Acyl-ester intermediate of the active site. Active-site charge relay system residues include D210 and H238. Salicylate-binding residues include H238, L253, and H257.

The protein belongs to the AB hydrolase superfamily. Methylesterase family.

It catalyses the reaction methyl salicylate + H2O = salicylate + methanol + H(+). Its pathway is plant hormone biosynthesis. Its activity is regulated as follows. Esterase activity is down-regulated by salicylic acid (SA) or by tetraFA, a synthetic SA analog. Required to convert methyl salicylate (MeSA) to salicylic acid (SA) as part of the signal transduction pathways that activate systemic acquired resistance in systemic tissue. MeSA is believed to be an inactive form that needs to be demethylated to exert a biological effect. Also able to catalyze the conversion of acibenzolar-S-methyl into acibenzolar to induce systemic acquired resistance. The protein is Salicylic acid-binding protein 2 of Nicotiana tabacum (Common tobacco).